The chain runs to 48 residues: Delta-stichotoxin-Hmg4b (48 aa).

3 disulfide bridges follow: Cys-3–Cys-43, Cys-5–Cys-33, and Cys-26–Cys-44.

The protein belongs to the sea anemone sodium channel inhibitory toxin family. Type II subfamily.

It is found in the secreted. The protein localises to the nematocyst. Functionally, binds specifically to voltage-gated sodium channels (Nav), thereby delaying their inactivation during signal transduction. Its toxicity is greater than that of RpII (AC P01534). This chain is Delta-stichotoxin-Hmg4b, found in Heteractis magnifica (Magnificent sea anemone).